Consider the following 375-residue polypeptide: Alcohol dehydrogenase 1 (375 aa).

N-acetylserine is present on Ser-2. Residues Cys-47, His-68, Cys-98, Cys-101, Cys-104, Cys-112, and Cys-175 each coordinate Zn(2+). Residues 200–205, Asp-224, and Lys-229 contribute to the NAD(+) site; that span reads GLGGVG. Lys-234 carries the post-translational modification N6-succinyllysine. 293-295 provides a ligand contact to NAD(+); it reads VGV. Lys-340 bears the N6-succinyllysine mark. Position 370 (Arg-370) interacts with NAD(+).

The protein belongs to the zinc-containing alcohol dehydrogenase family. Class-I subfamily. Zn(2+) is required as a cofactor.

It localises to the cytoplasm. It catalyses the reaction a primary alcohol + NAD(+) = an aldehyde + NADH + H(+). The catalysed reaction is a secondary alcohol + NAD(+) = a ketone + NADH + H(+). In Peromyscus maniculatus (North American deer mouse), this protein is Alcohol dehydrogenase 1 (ADH1).